The following is a 165-amino-acid chain: LOB domain-containing protein 3 (165 aa).

The LOB domain maps to 13–115; it reads SPCAGCKLLR…TQLAFAQAEL (103 aa).

This sequence belongs to the LOB domain-containing protein family. As to expression, expressed in young shoots, roots, stems, leaves and flowers. At the bases of lateral organs formed from vegetative, inflorescence, and floral meristems.

The protein localises to the nucleus. This chain is LOB domain-containing protein 3 (LBD3), found in Arabidopsis thaliana (Mouse-ear cress).